Consider the following 195-residue polypeptide: Probable nicotinate-nucleotide adenylyltransferase (195 aa).

Belongs to the NadD family.

The enzyme catalyses nicotinate beta-D-ribonucleotide + ATP + H(+) = deamido-NAD(+) + diphosphate. It participates in cofactor biosynthesis; NAD(+) biosynthesis; deamido-NAD(+) from nicotinate D-ribonucleotide: step 1/1. Its function is as follows. Catalyzes the reversible adenylation of nicotinate mononucleotide (NaMN) to nicotinic acid adenine dinucleotide (NaAD). This is Probable nicotinate-nucleotide adenylyltransferase from Salinibacter ruber (strain DSM 13855 / M31).